We begin with the raw amino-acid sequence, 269 residues long: Probable molybdenum ABC transporter permease protein HVO_B0370 (269 aa).

6 helical membrane-spanning segments follow: residues 26–46 (LLLA…LVFA), 69–89 (VVAA…LAYW), 100–120 (VILA…GMLL), 140–160 (SLFG…VVTA), 198–218 (ILAG…ATLM), and 243–263 (FPVA…VHAL). Positions 65-258 (ATNSVVAATL…LVGIAVGAIL (194 aa)) constitute an ABC transmembrane type-1 domain.

Belongs to the binding-protein-dependent transport system permease family. In terms of assembly, the complex is composed of two ATP-binding proteins, two transmembrane proteins (HVO_B0370) and a solute-binding protein (HVO_B0369).

Its subcellular location is the cell membrane. Part of an ABC transporter complex involved in molybdenum import. Responsible for the translocation of the substrate across the membrane. The chain is Probable molybdenum ABC transporter permease protein HVO_B0370 from Haloferax volcanii (strain ATCC 29605 / DSM 3757 / JCM 8879 / NBRC 14742 / NCIMB 2012 / VKM B-1768 / DS2) (Halobacterium volcanii).